We begin with the raw amino-acid sequence, 205 residues long: Recombination protein RecR (205 aa).

Residues 58–75 (CSECQNVTDRDSDPCVLC) form a C4-type zinc finger. The Toprim domain occupies 83-182 (TVICVVESPV…AVSKIARGIP (100 aa)).

The protein belongs to the RecR family.

Functionally, may play a role in DNA repair. It seems to be involved in an RecBC-independent recombinational process of DNA repair. It may act with RecF and RecO. The protein is Recombination protein RecR of Chlorobium phaeobacteroides (strain DSM 266 / SMG 266 / 2430).